We begin with the raw amino-acid sequence, 110 residues long: Thioredoxin (110 aa).

Residues lysine 3 to alanine 108 form the Thioredoxin domain. An intrachain disulfide couples cysteine 32 to cysteine 35. Lysine 105 carries the N6,N6-dimethyllysine; alternate modification. Lysine 105 carries the post-translational modification N6-methyllysine; alternate.

Functionally, participates in various redox reactions through the reversible oxidation of its active center dithiol to a disulfide and catalyzes dithiol-disulfide exchange reactions. The protein is Thioredoxin (trxA) of Chloroflexus aurantiacus (strain ATCC 29366 / DSM 635 / J-10-fl).